A 542-amino-acid polypeptide reads, in one-letter code: MLO-like protein 7 (542 aa).

At 1–38 the chain is on the extracellular side; sequence MITRSRCRRSLLWFLVFHGGATATGAPSGGKELSQTPT. Residues 39–59 traverse the membrane as a helical segment; that stretch reads WAVAVVCTFLILISHLLEKGL. Residues 60–82 are Cytoplasmic-facing; sequence QRLANWLWKKHKNSLLEALEKIK. Residues 83-103 form a helical membrane-spanning segment; it reads AELMILGFISLLLTFGEPYIL. At 104–165 the chain is on the extracellular side; it reads KICVPRKAAL…ITLKGLHQLH (62 aa). Residues 166–186 traverse the membrane as a helical segment; sequence ILLFFLAIFHIVYSLITMMLS. At 187–288 the chain is on the cytoplasmic side; that stretch reads RLKIRGWKKW…IKRSLEDDFK (102 aa). A helical transmembrane segment spans residues 289–309; sequence LVVGISPVLWASFVIFLLFNV. Over 310–315 the chain is Extracellular; that stretch reads NGWRTL. Residues 316–336 form a helical membrane-spanning segment; sequence FWASIPPLLIILAVGTKLQAI. The Cytoplasmic portion of the chain corresponds to 337 to 374; sequence MATMALEIVETHAVVQGMPLVQGSDRYFWFDCPQLLLH. A helical transmembrane segment spans residues 375 to 395; the sequence is LIHFALFQNAFQITHFFWIWY. Residues 396–414 lie on the Extracellular side of the membrane; that stretch reads SFGLKSCFHKDFNLVVSKL. Residues 415–435 traverse the membrane as a helical segment; it reads FLCLGALILCSYITLPLYALV. Residues 436–542 are Cytoplasmic-facing; sequence TQMGSHMKKA…QQQEMQFHNS (107 aa). Positions 449–470 are calmodulin-binding; that stretch reads EQMAKALKKWHKDIKLKKGKAR.

Belongs to the MLO family. In terms of tissue distribution, restricted to pollen, synergids, pistils and immature anthers. Also detected in seedlings, leaves, stems and inflorescens.

It localises to the cell membrane. It is found in the endomembrane system. May be involved in modulation of pathogen defense and leaf cell death. Activity seems to be regulated by Ca(2+)-dependent calmodulin binding and seems not to require heterotrimeric G proteins. Controls pollen tube reception in the female gametophyte synergids. The protein is MLO-like protein 7 (MLO7) of Arabidopsis thaliana (Mouse-ear cress).